The primary structure comprises 338 residues: Probable cytosolic iron-sulfur protein assembly protein Ciao1 (338 aa).

8 WD repeats span residues 12–51, 58–97, 102–141, 147–186, 193–232, 234–252, 253–291, and 302–338; these read GHRGRVWGAGWHPRDPVLATCGEDKTIRIWADDGTGRWVP, GHTRTIRDVAWSPCGRFLASASFDATVAIWDRRSGEFECN, GHENEVKSVSWSKSGALLATCSRDKSVWIWEVAQEDEYEC, THSQDVKKVEWHPNEDVLASASYDNTIQLYREDLADSDWS, SHDSTVWSIAFDASGSRLASCSDDQTVRIWQEYKPGNEFG, ACPDGKTPVWKCVCTLSGF, HSRAVYDISWCKKTGLIATACGDDMVRIFREVAGSPANE, and AHSQDANTVEWSPTVAGLLVTTSDDGDVKLWKFEDDE.

This sequence belongs to the WD repeat CIA1 family.

In terms of biological role, essential component of the cytosolic iron-sulfur (Fe/S) protein assembly machinery. Required for the maturation of extramitochondrial Fe/S proteins. In Culex quinquefasciatus (Southern house mosquito), this protein is Probable cytosolic iron-sulfur protein assembly protein Ciao1.